The following is a 59-amino-acid chain: Small, acid-soluble spore protein H 2 (59 aa).

This sequence belongs to the SspH family.

The protein localises to the spore core. The sequence is that of Small, acid-soluble spore protein H 2 from Bacillus cytotoxicus (strain DSM 22905 / CIP 110041 / 391-98 / NVH 391-98).